Reading from the N-terminus, the 94-residue chain is Em protein CS41 (94 aa).

Basic and acidic residues-rich tracts occupy residues 1–16, 33–53, and 74–94; these read MASG…DSLA, EAQE…KEQM, and GGER…KTKS. Residues 1-94 are disordered; the sequence is MASGQEKGRS…IDESKFKTKS (94 aa).

This sequence belongs to the small hydrophilic plant seed protein family.

It is thought to provide protection for the cytoplasm during the desiccation stage of embryo development. This is Em protein CS41 (EM) from Triticum aestivum (Wheat).